The primary structure comprises 149 residues: Large ribosomal subunit protein uL15 (149 aa).

The interval M1 to P64 is disordered. The segment covering T31–K40 has biased composition (basic residues).

The protein belongs to the universal ribosomal protein uL15 family. Part of the 50S ribosomal subunit.

Functionally, binds to the 23S rRNA. In Aquifex aeolicus (strain VF5), this protein is Large ribosomal subunit protein uL15.